We begin with the raw amino-acid sequence, 707 residues long: Ferric reduction oxidase 5 (707 aa).

Residues 1-9 (MGNMRSLVK) lie on the Cytoplasmic side of the membrane. A helical transmembrane segment spans residues 10-29 (MLMVVLFLGWIFVWIMISTN). The Extracellular portion of the chain corresponds to 30–54 (RFQNIWTPKLAKYLKTTYFGPQGMN). A helical transmembrane segment spans residues 55 to 73 (LVLLTVPMMFIAVLSCVYL). Topologically, residues 74–106 (HTQKQPSQTQSLYKCREWKVKGRMGRVMMVMNP) are cytoplasmic. The helical transmembrane segment at 107 to 130 (LGIVTATELTFSLLFLALLVWALS) threads the bilayer. The Extracellular portion of the chain corresponds to 131 to 198 (NYLYLSYHVH…VGLTSESSIK (68 aa)). The 120-residue stretch at 165–284 (GYVGHYCWAF…HLYGLYIVFY (120 aa)) folds into the Ferric oxidoreductase domain. Residues 199–222 (YHIWLGHVSNFCFLVHTVVFLIYW) traverse the membrane as a helical segment. Heme contacts are provided by histidine 200 and histidine 214. The Cytoplasmic segment spans residues 223 to 272 (AMVNKLMETFAWNATYVPNLAGTIAMVIGIAIWVTSLPSFRRKKFEIFFY). The helical transmembrane segment at 273 to 297 (THHLYGLYIVFYAIHVGDSWFCMIL) threads the bilayer. Histidine 274 and histidine 287 together coordinate heme. The Extracellular segment spans residues 298–319 (PNIFLFFIDRYLRFLQSTKRSR). Positions 313–416 (QSTKRSRLVS…EGPYGPNSFD (104 aa)) constitute an FAD-binding FR-type domain. A helical membrane pass occupies residues 320-340 (LVSAKILPSDNLELTFAKTSG). Topologically, residues 341-533 (LHYTPTSILF…PISPVLGPNN (193 aa)) are cytoplasmic. 362–365 (HPFT) contributes to the FAD binding site. Residue 408–411 (GPYG) coordinates NAD(+). The helical transmembrane segment at 534 to 556 (FLWLGVVILSSFVMFLLLIGIVT) threads the bilayer. The Extracellular portion of the chain corresponds to 557-576 (RYYIYPVDHNTGSIYNFTYR). A helical transmembrane segment spans residues 577–598 (VLWVMFLGCVCIFISSSIIFLW). Residues 599 to 707 (RKKENKEGDK…LHFEAISFNW (109 aa)) are Cytoplasmic-facing. Residues 608–630 (KDSKKQVQSVEFQTPTSSPGSWF) form a disordered region. Polar residues predominate over residues 613-627 (QVQSVEFQTPTSSPG).

This sequence belongs to the ferric reductase (FRE) family. It depends on FAD as a cofactor. In terms of tissue distribution, expressed at low levels in roots, shoots, pedicels and inflorescence stems, flowers, sepals, stigmas and anther filaments.

The protein resides in the cell membrane. It carries out the reaction 2 a Fe(II)-siderophore + NAD(+) + H(+) = 2 a Fe(III)-siderophore + NADH. Its function is as follows. Ferric chelate reductase probably involved in iron reduction in shoots. May participate in the transport of electrons to a Fe(3+) ion via FAD and heme intermediates. May act in iron metabolism in reproductive organs. May function as root surface cupric chelate reductase and participate in the reduction of Cu(2+), for Cu(+) acquisition via Cu(+) transporters in response to copper deficiency. This Arabidopsis thaliana (Mouse-ear cress) protein is Ferric reduction oxidase 5 (FRO5).